The following is a 295-amino-acid chain: 3-hydroxy-5-phosphonooxypentane-2,4-dione thiolase (295 aa).

Lys-203 functions as the Schiff-base intermediate with substrate in the catalytic mechanism.

It belongs to the DeoC/FbaB aldolase family. In terms of assembly, homodecamer.

It localises to the cytoplasm. The catalysed reaction is dihydroxyacetone phosphate + acetyl-CoA = 3-hydroxy-2,4-dioxopentyl phosphate + CoA. In terms of biological role, involved in the degradation of phospho-AI-2, thereby terminating induction of the lsr operon and closing the AI-2 signaling cycle. Catalyzes the transfer of an acetyl moiety from 3-hydroxy-5-phosphonooxypentane-2,4-dione to CoA to form glycerone phosphate and acetyl-CoA. The protein is 3-hydroxy-5-phosphonooxypentane-2,4-dione thiolase of Enterobacter sp. (strain 638).